Reading from the N-terminus, the 355-residue chain is Vacuolar protein sorting-associated protein 37C (355 aa).

S29 bears the Phosphoserine mark. One can recognise a VPS37 C-terminal domain in the interval 78-167 (VERCQEQKAK…RKPRASQELA (90 aa)). A disordered region spans residues 159–355 (KPRASQELAG…PPPGPAWPGY (197 aa)). 2 stretches are compositionally biased toward pro residues: residues 170–186 (APPP…PQGT) and 194–214 (PQPP…PSLP). Positions 291–304 (APSPGYPQQSPYPA) are enriched in low complexity. A compositionally biased stretch (pro residues) spans 321-355 (PGQPQPSVPLQPPYPPGPAPPYGFPPPPGPAWPGY).

Belongs to the VPS37 family. Component of the ESCRT-I complex (endosomal sorting complex required for transport I) which consists of TSG101, VPS28, a VPS37 protein (VPS37A to -D) and MVB12A or MVB12B in a 1:1:1:1 stoichiometry. Interacts with TSG101, VPS28, MVB12A and MVB12B. Component of the ESCRT-I complex (endosomal sorting complex required for transport I) which consists of TSG101, VPS28, a VPS37 protein (VPS37A to -D) and UBAP1 in a 1:1:1:1 stoichiometry. Interacts with HGS and STAM2. Interacts with CEP55. In terms of processing, phosphorylated by TBK1.

It is found in the late endosome membrane. Component of the ESCRT-I complex, a regulator of vesicular trafficking process. Required for the sorting of endocytic ubiquitinated cargos into multivesicular bodies. May be involved in cell growth and differentiation. The sequence is that of Vacuolar protein sorting-associated protein 37C (VPS37C) from Homo sapiens (Human).